The following is a 1089-amino-acid chain: Platelet-derived growth factor receptor alpha (1089 aa).

The N-terminal stretch at Met-1–Gln-24 is a signal peptide. Ig-like C2-type domains are found at residues Leu-25–Glu-113, Ile-117–Ser-201, Glu-202–Thr-306, Pro-319–Ser-410, and Pro-414–Val-517. Topologically, residues Leu-25–Ala-528 are extracellular. N-linked (GlcNAc...) asparagine glycans are attached at residues Asn-42, Asn-76, Asn-89, Asn-103, and Asn-179. Cys-49 and Cys-100 form a disulfide bridge. 2 cysteine pairs are disulfide-bonded: Cys-150-Cys-189 and Cys-235-Cys-290. Asn-353, Asn-359, Asn-458, Asn-468, and Asn-506 each carry an N-linked (GlcNAc...) asparagine glycan. Residues Cys-435 and Cys-501 are joined by a disulfide bond. A helical membrane pass occupies residues Ala-529 to Trp-549. The Cytoplasmic segment spans residues Lys-550–Leu-1089. Residues Tyr-572 and Tyr-574 each carry the phosphotyrosine; by autocatalysis modification. A Protein kinase domain is found at Leu-593–Leu-954. Residues Leu-599–Val-607 and Lys-627 each bind ATP. Phosphotyrosine; by autocatalysis is present on residues Tyr-720, Tyr-731, Tyr-742, Tyr-754, Tyr-762, and Tyr-768. Residue Asp-818 is the Proton acceptor of the active site. Phosphotyrosine; by autocatalysis occurs at positions 849, 988, and 1018. Positions Tyr-1018–Leu-1089 are disordered. Positions Ser-1041–Phe-1059 are enriched in polar residues. Positions Glu-1065–Leu-1089 are enriched in acidic residues.

It belongs to the protein kinase superfamily. Tyr protein kinase family. CSF-1/PDGF receptor subfamily. Interacts with homodimeric PDGFA, PDGFB and PDGFC, and with heterodimers formed by PDGFA and PDGFB. Monomer in the absence of bound ligand. Interaction with dimeric PDGFA, PDGFB and/or PDGFC leads to receptor dimerization, where both PDGFRA homodimers and heterodimers with PDGFRB are observed. Interacts (tyrosine phosphorylated) with SHB (via SH2 domain). Interacts (tyrosine phosphorylated) with SHF (via SH2 domain). Interacts (tyrosine phosphorylated) with SRC (via SH2 domain). Interacts (tyrosine phosphorylated) with PIK3R1. Interacts (tyrosine phosphorylated) with PLCG1 (via SH2 domain). Interacts (tyrosine phosphorylated) with CRK, GRB2 and GRB7. Interacts with CD248; this interaction promotes PDGF receptor signaling pathway. Post-translationally, ubiquitinated, leading to its internalization and degradation. Autophosphorylated on tyrosine residues upon ligand binding. Autophosphorylation occurs in trans, i.e. one subunit of the dimeric receptor phosphorylates tyrosine residues on the other subunit. Phosphorylation at Tyr-731 and Tyr-742 is important for interaction with PIK3R1. Phosphorylation at Tyr-720 and Tyr-754 is important for interaction with PTPN11. Phosphorylation at Tyr-762 is important for interaction with CRK. Phosphorylation at Tyr-572 and Tyr-574 is important for interaction with SRC and SRC family members. Phosphorylation at Tyr-988 and Tyr-1018 is important for interaction with PLCG1. In terms of tissue distribution, focally expressed in cortical interstitial cells and highly expressed in the interstitium of the papillary region. Also expressed by adventitial cells in arterial vessels. Up-regulated in areas of renal fibrosis. In mice with unilateral ureteral obstruction, expression in cortical interstitial cells becomes prominent at day 4 which increases progressively until day 14.

It localises to the cell membrane. The protein localises to the cell projection. Its subcellular location is the cilium. It is found in the golgi apparatus. The enzyme catalyses L-tyrosyl-[protein] + ATP = O-phospho-L-tyrosyl-[protein] + ADP + H(+). With respect to regulation, present in an inactive conformation in the absence of bound ligand. Binding of PDGFA and/or PDGFB leads to dimerization and activation by autophosphorylation on tyrosine residues. Inhibited by imatinib, nilotinib and sorafenib. Tyrosine-protein kinase that acts as a cell-surface receptor for PDGFA, PDGFB and PDGFC and plays an essential role in the regulation of embryonic development, cell proliferation, survival and chemotaxis. Depending on the context, promotes or inhibits cell proliferation and cell migration. Plays an important role in the differentiation of bone marrow-derived mesenchymal stem cells. Required for normal skeleton development and cephalic closure during embryonic development. Required for normal development of the mucosa lining the gastrointestinal tract, and for recruitment of mesenchymal cells and normal development of intestinal villi. Plays a role in cell migration and chemotaxis in wound healing. Plays a role in platelet activation, secretion of agonists from platelet granules, and in thrombin-induced platelet aggregation. Binding of its cognate ligands - homodimeric PDGFA, homodimeric PDGFB, heterodimers formed by PDGFA and PDGFB or homodimeric PDGFC -leads to the activation of several signaling cascades; the response depends on the nature of the bound ligand and is modulated by the formation of heterodimers between PDGFRA and PDGFRB. Phosphorylates PIK3R1, PLCG1, and PTPN11. Activation of PLCG1 leads to the production of the cellular signaling molecules diacylglycerol and inositol 1,4,5-trisphosphate, mobilization of cytosolic Ca(2+) and the activation of protein kinase C. Phosphorylates PIK3R1, the regulatory subunit of phosphatidylinositol 3-kinase, and thereby mediates activation of the AKT1 signaling pathway. Mediates activation of HRAS and of the MAP kinases MAPK1/ERK2 and/or MAPK3/ERK1. Promotes activation of STAT family members STAT1, STAT3 and STAT5A and/or STAT5B. Receptor signaling is down-regulated by protein phosphatases that dephosphorylate the receptor and its down-stream effectors, and by rapid internalization of the activated receptor. This chain is Platelet-derived growth factor receptor alpha (Pdgfra), found in Mus musculus (Mouse).